We begin with the raw amino-acid sequence, 215 residues long: uncharacterized protein (215 aa).

Residues Ser114, Asp162, and His194 each act as charge relay system in the active site.

This sequence belongs to the AB hydrolase superfamily. AB hydrolase 2 family.

This is an uncharacterized protein from Rickettsia prowazekii (strain Madrid E).